The chain runs to 169 residues: Protein HIGH ARSENIC CONTENT 1, mitochondrial (169 aa).

The transit peptide at 1–59 (MYTYSLLNLSHCRRQTRKKRKTDHTEGFLMEETKPKTVEDVETVDVYTAKGFLSTGHRY) directs the protein to the mitochondrion. A Rhodanese domain is found at 60-153 (LDVRTNEEFA…WVDAGFAGDK (94 aa)). The Cysteine persulfide intermediate role is filled by cysteine 113.

In terms of tissue distribution, expressed in root hairs, epidermal cells at the surface of the root and in the pericycle within the stele.

It localises to the mitochondrion. The enzyme catalyses [glutaredoxin]-dithiol + arsenate + glutathione + H(+) = glutathionyl-S-S-[glutaredoxin] + arsenite + H2O. With respect to regulation, inhibited by trobenzenesulphonic acid (TNBS). Arsenate reductase critical for arsenic tolerance. Reduces arsenate to arsenite in the root, facilitating efflux of arsenic back into the soil to limit both its accumulation in the root and transport to the shoot. Essential for arsenite efflux from the root, but not necessary for arsenate uptake. The protein is Protein HIGH ARSENIC CONTENT 1, mitochondrial of Arabidopsis thaliana (Mouse-ear cress).